The sequence spans 248 residues: tRNA pseudouridine synthase A 2 (248 aa).

The active-site Nucleophile is the Asp-55. Residue Tyr-113 participates in substrate binding.

It belongs to the tRNA pseudouridine synthase TruA family. In terms of assembly, homodimer.

It carries out the reaction uridine(38/39/40) in tRNA = pseudouridine(38/39/40) in tRNA. Its function is as follows. Formation of pseudouridine at positions 38, 39 and 40 in the anticodon stem and loop of transfer RNAs. The polypeptide is tRNA pseudouridine synthase A 2 (Clostridium tetani (strain Massachusetts / E88)).